Reading from the N-terminus, the 189-residue chain is Probable chorismate pyruvate-lyase (189 aa).

Substrate is bound by residues R77, L115, and E174.

It belongs to the UbiC family.

The protein localises to the cytoplasm. It carries out the reaction chorismate = 4-hydroxybenzoate + pyruvate. The protein operates within cofactor biosynthesis; ubiquinone biosynthesis. Functionally, removes the pyruvyl group from chorismate, with concomitant aromatization of the ring, to provide 4-hydroxybenzoate (4HB) for the ubiquinone pathway. In Shewanella sp. (strain MR-7), this protein is Probable chorismate pyruvate-lyase.